A 337-amino-acid polypeptide reads, in one-letter code: Ketol-acid reductoisomerase (NADP(+)) (337 aa).

A KARI N-terminal Rossmann domain is found at 3 to 183 (VEMFYDDDAD…GGTRAGVIKT (181 aa)). Residues 26 to 29 (YGSQ), Ser-52, Ser-54, and 84 to 87 (DTAQ) each bind NADP(+). His-109 is an active-site residue. Gly-135 is a binding site for NADP(+). The KARI C-terminal knotted domain occupies 184–329 (TFKEETETDL…AKLRGLMSWV (146 aa)). Asp-192, Glu-196, Glu-228, and Glu-232 together coordinate Mg(2+). Ser-253 serves as a coordination point for substrate.

It belongs to the ketol-acid reductoisomerase family. The cofactor is Mg(2+).

It catalyses the reaction (2R)-2,3-dihydroxy-3-methylbutanoate + NADP(+) = (2S)-2-acetolactate + NADPH + H(+). It carries out the reaction (2R,3R)-2,3-dihydroxy-3-methylpentanoate + NADP(+) = (S)-2-ethyl-2-hydroxy-3-oxobutanoate + NADPH + H(+). Its pathway is amino-acid biosynthesis; L-isoleucine biosynthesis; L-isoleucine from 2-oxobutanoate: step 2/4. It participates in amino-acid biosynthesis; L-valine biosynthesis; L-valine from pyruvate: step 2/4. Functionally, involved in the biosynthesis of branched-chain amino acids (BCAA). Catalyzes an alkyl-migration followed by a ketol-acid reduction of (S)-2-acetolactate (S2AL) to yield (R)-2,3-dihydroxy-isovalerate. In the isomerase reaction, S2AL is rearranged via a Mg-dependent methyl migration to produce 3-hydroxy-3-methyl-2-ketobutyrate (HMKB). In the reductase reaction, this 2-ketoacid undergoes a metal-dependent reduction by NADPH to yield (R)-2,3-dihydroxy-isovalerate. The polypeptide is Ketol-acid reductoisomerase (NADP(+)) (Nocardia farcinica (strain IFM 10152)).